A 748-amino-acid chain; its full sequence is Formate acetyltransferase (748 aa).

In terms of domain architecture, PFL spans 5 to 618 (NNHTNAWQGF…KTGNTPDGRK (614 aa)). C412 functions as the S-acetylcysteine intermediate in the catalytic mechanism. C413 serves as the catalytic Cysteine radical intermediate. In terms of domain architecture, Glycine radical spans 625-748 (PGANPMHGRD…VISRTFHESM (124 aa)). At G723 the chain carries Glycine radical.

The protein belongs to the glycyl radical enzyme (GRE) family. PFL subfamily. Homodimer.

It is found in the cytoplasm. The catalysed reaction is formate + acetyl-CoA = pyruvate + CoA. It participates in fermentation; pyruvate fermentation; formate from pyruvate: step 1/1. In terms of biological role, catalyzes the conversion of pyruvate to formate and acetyl-CoA. The polypeptide is Formate acetyltransferase (pflB) (Staphylococcus epidermidis (strain ATCC 12228 / FDA PCI 1200)).